Here is a 344-residue protein sequence, read N- to C-terminus: Protein MENT (344 aa).

Residues methionine 1–glycine 22 form the signal peptide. A compositionally biased stretch (polar residues) spans aspartate 162–glutamine 182. Positions aspartate 162–serine 197 are disordered.

Post-translationally, phosphorylation sites are present in the extracellular medium.

It localises to the secreted. Involved in control of cellular proliferation. Onconcogenic modifier contributing to the tumor suppressor function of DNMT3B. The polypeptide is Protein MENT (Ment) (Rattus norvegicus (Rat)).